Reading from the N-terminus, the 324-residue chain is Olfactory receptor 11H4 (324 aa).

The Extracellular portion of the chain corresponds to 1 to 35 (MSFFFVDLRPMNRSATHIVTEFILLGFPGCWKIQI). N12 carries N-linked (GlcNAc...) asparagine glycosylation. Residues 36–56 (FLFSLFLVIYVLTLLGNGAII) form a helical membrane-spanning segment. Residues 57–64 (YAVRCNPL) lie on the Cytoplasmic side of the membrane. A helical transmembrane segment spans residues 65–85 (LHTPMYFLLGNFAFLEIWYVS). At 86–109 (STIPNMLVNILSKTKAISFSGCFL) the chain is on the extracellular side. The cysteines at positions 107 and 199 are disulfide-linked. Residues 110–130 (QFYFFFSLGTTECLFLAVMAY) traverse the membrane as a helical segment. The Cytoplasmic segment spans residues 131-149 (DRYLAICHPLQYPAIMTVR). The chain crosses the membrane as a helical span at residues 150–170 (FCGKLVSFCWLIGFLGYPIPI). The Extracellular segment spans residues 171–207 (FYISQLPFCGPNIIDHFLCDMDPLMALSCAPAPITEC). A helical transmembrane segment spans residues 208 to 227 (IFYTQSSLVLFFTSMYILRS). The Cytoplasmic portion of the chain corresponds to 228 to 247 (YILLLTAVFQVPSAAGRRKA). The helical transmembrane segment at 248-268 (FSTCGSHLVVVSLFYGTVMVM) threads the bilayer. The Extracellular portion of the chain corresponds to 269–281 (YVSPTYGIPTLLQ). Residues 282–302 (KILTLVYSVTTPLFNPLIYTL) form a helical membrane-spanning segment. The Cytoplasmic portion of the chain corresponds to 303–324 (RNKDMKLALRNVLFGMRIRQNS).

Belongs to the G-protein coupled receptor 1 family.

Its subcellular location is the cell membrane. Functionally, odorant receptor. This chain is Olfactory receptor 11H4 (OR11H4), found in Homo sapiens (Human).